We begin with the raw amino-acid sequence, 231 residues long: 5'-methylthioadenosine/S-adenosylhomocysteine nucleosidase (231 aa).

The active-site Proton acceptor is the Glu12. Substrate is bound by residues Gly78, Val153, and 174–175 (ME). Asp198 functions as the Proton donor in the catalytic mechanism.

It belongs to the PNP/UDP phosphorylase family. MtnN subfamily.

The catalysed reaction is S-adenosyl-L-homocysteine + H2O = S-(5-deoxy-D-ribos-5-yl)-L-homocysteine + adenine. The enzyme catalyses S-methyl-5'-thioadenosine + H2O = 5-(methylsulfanyl)-D-ribose + adenine. It carries out the reaction 5'-deoxyadenosine + H2O = 5-deoxy-D-ribose + adenine. The protein operates within amino-acid biosynthesis; L-methionine biosynthesis via salvage pathway; S-methyl-5-thio-alpha-D-ribose 1-phosphate from S-methyl-5'-thioadenosine (hydrolase route): step 1/2. Its function is as follows. Catalyzes the irreversible cleavage of the glycosidic bond in both 5'-methylthioadenosine (MTA) and S-adenosylhomocysteine (SAH/AdoHcy) to adenine and the corresponding thioribose, 5'-methylthioribose and S-ribosylhomocysteine, respectively. Also cleaves 5'-deoxyadenosine, a toxic by-product of radical S-adenosylmethionine (SAM) enzymes, into 5-deoxyribose and adenine. The chain is 5'-methylthioadenosine/S-adenosylhomocysteine nucleosidase from Aliivibrio fischeri (strain MJ11) (Vibrio fischeri).